We begin with the raw amino-acid sequence, 192 residues long: HTH-type transcriptional regulator Hpr (192 aa).

The 145-residue stretch at S12–G156 folds into the HTH marR-type domain. Positions I62–E85 form a DNA-binding region, H-T-H motif.

As to quaternary structure, homodimer.

Its function is as follows. Negative regulator of protease production and sporulation. This Halalkalibacterium halodurans (strain ATCC BAA-125 / DSM 18197 / FERM 7344 / JCM 9153 / C-125) (Bacillus halodurans) protein is HTH-type transcriptional regulator Hpr.